The chain runs to 266 residues: Glioma pathogenesis-related protein 1 (266 aa).

A signal peptide spans 1–21; the sequence is MRVTLATIAWMVSFVSNYSHT. Residues 38–175 form the SCP domain; sequence VRIHNKFRSE…SNGAHFICNY (138 aa). Residues 233–255 traverse the membrane as a helical segment; sequence YTSLFLIVNSVILILSVIITILV.

The protein belongs to the CRISP family. As to expression, according to PubMed:8973356, it is ubiquitously expressed with high levels in lung and kidney and low levels in heart and liver. Highly expressed in cell lines derived from nervous system tumors arising from glia, low or absent in non-glial-derived nervous system tumor cell lines. Also found in fetal kidney. According to PubMed:7607567 it is expressed only in brain tumor glioblastoma multiforme/astrocytoma and not in other nervous system tumors or normal fetal or adult tissues.

It is found in the membrane. The polypeptide is Glioma pathogenesis-related protein 1 (GLIPR1) (Homo sapiens (Human)).